The primary structure comprises 222 residues: Endonuclease V (222 aa).

Mg(2+) is bound by residues aspartate 43 and aspartate 109.

Belongs to the endonuclease V family. Requires Mg(2+) as cofactor.

The protein resides in the cytoplasm. It catalyses the reaction Endonucleolytic cleavage at apurinic or apyrimidinic sites to products with a 5'-phosphate.. Its function is as follows. DNA repair enzyme involved in the repair of deaminated bases. Selectively cleaves double-stranded DNA at the second phosphodiester bond 3' to a deoxyinosine leaving behind the intact lesion on the nicked DNA. The protein is Endonuclease V of Roseiflexus sp. (strain RS-1).